The primary structure comprises 285 residues: Transmembrane protein DDB_G0269096 (285 aa).

Disordered stretches follow at residues 1 to 25 and 59 to 87; these read MEDRNLERNIGSDISSSSSIDMSQS and SFENGENNNNNNNNNNNNNNNNNNNNNKN. 2 stretches are compositionally biased toward low complexity: residues 12–25 and 65–85; these read SDISSSSSIDMSQS and NNNNNNNNNNNNNNNNNNNNN. The next 5 membrane-spanning stretches (helical) occupy residues 124–144, 152–172, 182–202, 205–225, and 250–270; these read LEEIGWTWLASFTGILVLALI, AQMQVLIGSFAASAVIIFGVP, LIMGHFLSAVVGSVIRVALVY, ANFEVACALAVSLSIMLMQFT, and FYFIFVPILSGALIMLLTALV.

The protein resides in the membrane. This is Transmembrane protein DDB_G0269096 from Dictyostelium discoideum (Social amoeba).